The sequence spans 132 residues: UPF0102 protein Acel_1550 (132 aa).

The protein belongs to the UPF0102 family.

This chain is UPF0102 protein Acel_1550, found in Acidothermus cellulolyticus (strain ATCC 43068 / DSM 8971 / 11B).